The following is a 1097-amino-acid chain: RecBCD enzyme subunit RecC (1097 aa).

The protein belongs to the RecC family. In terms of assembly, heterotrimer of RecB, RecC and RecD. All subunits contribute to DNA-binding.

Functionally, a helicase/nuclease that prepares dsDNA breaks (DSB) for recombinational DNA repair. Binds to DSBs and unwinds DNA via a highly rapid and processive ATP-dependent bidirectional helicase activity. Holoenzyme degrades any linearized DNA that is unable to undergo homologous recombination. In the holoenzyme this subunit recognizes the wild-type Chi sequence, and when added to isolated RecB increases its ATP-dependent helicase processivity. Unlike the case in E.coli, suppresses RecA-dependent homologous recombination, is instead required for single-strand annealing pathway repair of DSB. The sequence is that of RecBCD enzyme subunit RecC from Mycobacterium tuberculosis (strain CDC 1551 / Oshkosh).